The sequence spans 110 residues: T cell receptor alpha variable 39 (110 aa).

The N-terminal stretch at M1–G18 is a signal peptide. Residues E19 to D110 form the Ig-like domain. N36 and N42 each carry an N-linked (GlcNAc...) asparagine glycan. C41 and C107 are oxidised to a cystine.

Alpha-beta TR is a heterodimer composed of an alpha and beta chain; disulfide-linked. The alpha-beta TR is associated with the transmembrane signaling CD3 coreceptor proteins to form the TR-CD3 (TcR or TCR). The assembly of alpha-beta TR heterodimers with CD3 occurs in the endoplasmic reticulum where a single alpha-beta TR heterodimer associates with one CD3D-CD3E heterodimer, one CD3G-CD3E heterodimer and one CD247 homodimer forming a stable octameric structure. CD3D-CD3E and CD3G-CD3E heterodimers preferentially associate with TR alpha and TR beta chains, respectively. The association of the CD247 homodimer is the last step of TcR assembly in the endoplasmic reticulum and is required for transport to the cell surface.

Its subcellular location is the cell membrane. Its function is as follows. V region of the variable domain of T cell receptor (TR) alpha chain that participates in the antigen recognition. Alpha-beta T cell receptors are antigen specific receptors which are essential to the immune response and are present on the cell surface of T lymphocytes. Recognize peptide-major histocompatibility (MH) (pMH) complexes that are displayed by antigen presenting cells (APC), a prerequisite for efficient T cell adaptive immunity against pathogens. Binding of alpha-beta TR to pMH complex initiates TR-CD3 clustering on the cell surface and intracellular activation of LCK that phosphorylates the ITAM motifs of CD3G, CD3D, CD3E and CD247 enabling the recruitment of ZAP70. In turn ZAP70 phosphorylates LAT, which recruits numerous signaling molecules to form the LAT signalosome. The LAT signalosome propagates signal branching to three major signaling pathways, the calcium, the mitogen-activated protein kinase (MAPK) kinase and the nuclear factor NF-kappa-B (NF-kB) pathways, leading to the mobilization of transcription factors that are critical for gene expression and essential for T cell growth and differentiation. The T cell repertoire is generated in the thymus, by V-(D)-J rearrangement. This repertoire is then shaped by intrathymic selection events to generate a peripheral T cell pool of self-MH restricted, non-autoaggressive T cells. Post-thymic interaction of alpha-beta TR with the pMH complexes shapes TR structural and functional avidity. This Homo sapiens (Human) protein is T cell receptor alpha variable 39.